A 303-amino-acid polypeptide reads, in one-letter code: MSFKEVSTENGVLTPLITIKEKAYMIIEGLNEEEIELLNTRLPKLSKKALARNRYSNIVPYENTRVRLDPMWKEACDYINASIVKIPSGKTFIATQGPTSNSIDVFWKMVWQSVPKSGIIVMLTKLRERHRLKCDIYWPVELFETLNIGDLSVILVKVYTLTSLNEVQVREFELNKDGVKKKILHFYYNGWPDFGAPHTFSLLSLTRYIKSLSYSPDFETAPIIVHCSAGCGRTGTFMALFEILSQTDDSTSTSKFEVDNIANIVSSLRSQRMQSVQSVDQLVFLYTVSQELLQGKEFLLPQL.

The 269-residue stretch at 24 to 292 (YMIIEGLNEE…VFLYTVSQEL (269 aa)) folds into the Tyrosine-protein phosphatase domain. Residue Cys227 is the Phosphocysteine intermediate of the active site.

The protein belongs to the protein-tyrosine phosphatase family. Non-receptor class subfamily.

The protein localises to the cytoplasm. It catalyses the reaction O-phospho-L-tyrosyl-[protein] + H2O = L-tyrosyl-[protein] + phosphate. In terms of biological role, contributes to dephosphorylation of tyrosine 15 of cdc2. This Schizosaccharomyces pombe (strain 972 / ATCC 24843) (Fission yeast) protein is Tyrosine-protein phosphatase 3 (pyp3).